The primary structure comprises 272 residues: Putative phosphoenolpyruvate synthase regulatory protein (272 aa).

152–159 (GVSRCGKT) is a binding site for ADP.

Belongs to the pyruvate, phosphate/water dikinase regulatory protein family. PSRP subfamily.

The catalysed reaction is [pyruvate, water dikinase] + ADP = [pyruvate, water dikinase]-phosphate + AMP + H(+). It carries out the reaction [pyruvate, water dikinase]-phosphate + phosphate + H(+) = [pyruvate, water dikinase] + diphosphate. Bifunctional serine/threonine kinase and phosphorylase involved in the regulation of the phosphoenolpyruvate synthase (PEPS) by catalyzing its phosphorylation/dephosphorylation. This Ectopseudomonas mendocina (strain ymp) (Pseudomonas mendocina) protein is Putative phosphoenolpyruvate synthase regulatory protein.